A 103-amino-acid chain; its full sequence is Small ribosomal subunit protein uS10 (103 aa).

Belongs to the universal ribosomal protein uS10 family. As to quaternary structure, part of the 30S ribosomal subunit.

Functionally, involved in the binding of tRNA to the ribosomes. The sequence is that of Small ribosomal subunit protein uS10 from Chlorobium chlorochromatii (strain CaD3).